The chain runs to 955 residues: B3 domain-containing protein Os07g0563300 (955 aa).

Pro residues-rich tracts occupy residues Met-1–Ser-20 and Val-29–Pro-45. Disordered regions lie at residues Met-1–Arg-81 and Ala-325–Leu-392. Low complexity predominate over residues Gln-62–Pro-71. Residues Asp-332 to Lys-342 show a composition bias toward polar residues. Over residues Leu-343–Pro-355 the composition is skewed to basic and acidic residues. The segment covering Gln-382–Leu-392 has biased composition (low complexity). A DNA-binding region (TF-B3) is located at residues Phe-453–Thr-554. Composition is skewed to polar residues over residues Leu-556–Lys-565 and Asn-598–Glu-608. The tract at residues Leu-556 to Ser-642 is disordered. The CW-type zinc finger occupies Ser-708 to Met-758. 4 residues coordinate Zn(2+): Cys-717, Cys-720, Cys-738, and Cys-750. Positions Met-856–Thr-955 are disordered. The segment covering Arg-862–Pro-877 has biased composition (basic and acidic residues). Polar residues-rich tracts occupy residues Gly-878–His-900 and Thr-920–Gln-933. Positions Glu-939–Thr-955 are enriched in basic and acidic residues.

The protein resides in the nucleus. This Oryza sativa subsp. japonica (Rice) protein is B3 domain-containing protein Os07g0563300.